The sequence spans 350 residues: Cytosolic Fe-S cluster assembly factor NBP35 (350 aa).

A disordered region spans residues 1–30 (MENGDIPEDANEHCPGPQSESAGKSDSCAG). The [4Fe-4S] cluster site is built by C14, C28, C31, and C37. 67–74 (GKGGVGKS) provides a ligand contact to ATP.

It belongs to the Mrp/NBP35 ATP-binding proteins family. NUBP1/NBP35 subfamily. In terms of assembly, homodimer and homotetramer. Predominantly homodimeric. [4Fe-4S] cluster serves as cofactor.

The protein localises to the cytoplasm. Component of the cytosolic iron-sulfur (Fe-S) protein assembly (CIA) machinery. Required for maturation of extramitochondrial Fe-S proteins. Functions as a Fe-S scaffold, mediating the de novo assembly of an Fe-S cluster and its transfer to target apoproteins. Essential for embryo development. The polypeptide is Cytosolic Fe-S cluster assembly factor NBP35 (Arabidopsis thaliana (Mouse-ear cress)).